The sequence spans 744 residues: Tripartite motif-containing protein 3 (744 aa).

Position 2 is an N-acetylalanine (A2). The segment at A2–P290 is interaction with KIF21B. S7 is modified (phosphoserine). The segment at C22 to R63 adopts an RING-type zinc-finger fold. A B box-type zinc finger spans residues G110 to L151. Residues C115, H118, C138, and H143 each contribute to the Zn(2+) site. The stretch at D153 to E224 forms a coiled coil. A Filamin repeat occupies T317 to A418. A disordered region spans residues R420–K462. At S427 the chain carries Phosphoserine. NHL repeat units lie at residues V473–E516, K520–E563, G564–N605, V609–D652, L656–S699, and G700–L743.

It belongs to the TRIM/RBCC family. As to quaternary structure, forms homooligomers. Interacts with TRIM2; this interaction reduces TRIM2 activity. Associates with myosin-Vb (MYO5B) and alpha-actinin-4 (ACTN4). Component of the CART complex, at least composed of ACTN4, HGS/HRS, MYO5B and TRIM3. Interacts with ZFYVE28/LST2. Interacts with KIF21B. In terms of tissue distribution, highly expressed in the brain, moderate levels in the lung, very low levels in the liver, kidney and heart. In the brain, expression was highest in the cerebellum. Expression in the brain is found at low levels at embryonic day 15 and then increases during the first two postnatal weeks before decreasing through adulthood.

It localises to the cytoplasm. The protein resides in the early endosome. The protein localises to the golgi apparatus. Its subcellular location is the trans-Golgi network. It is found in the cell projection. It localises to the dendrite. The catalysed reaction is S-ubiquitinyl-[E2 ubiquitin-conjugating enzyme]-L-cysteine + [acceptor protein]-L-lysine = [E2 ubiquitin-conjugating enzyme]-L-cysteine + N(6)-ubiquitinyl-[acceptor protein]-L-lysine.. Its function is as follows. E3 ubiquitin ligase that plays essential roles in neuronal functions such as regulation of neuronal plasticity, learning, and memory. In addition to its neuronal functions, participates in other biological processes such as innate immunity or cell cycle regulation. Component of the cytoskeleton-associated recycling or transport complex in neurons, polyubiquitinates gamma-actin, thus regulating neuronal plasticity, learning, and memory. Ubiquitinates postsynaptic scaffold GKAP, a neuronal substrate involved in synaptic remodeling and thereby modulates dendritic spine morphology. Positively regulates motility of microtubule-dependent motor protein KIF21B. Induces growth arrest via its RING-dependent E3 ligase activity and ubiquinates CDKN1A. Positively regulates TLR3-mediated signaling by mediating 'Lys-63'-linked polyubiquitination of TLR3. In turn, promotes the recognition and sorting of polyubiquitinated TLR3 by the ESCRT complexes. This chain is Tripartite motif-containing protein 3 (Trim3), found in Rattus norvegicus (Rat).